We begin with the raw amino-acid sequence, 423 residues long: UPF0597 protein TTE0269 (423 aa).

The protein belongs to the UPF0597 family.

This Caldanaerobacter subterraneus subsp. tengcongensis (strain DSM 15242 / JCM 11007 / NBRC 100824 / MB4) (Thermoanaerobacter tengcongensis) protein is UPF0597 protein TTE0269.